The sequence spans 351 residues: MRNAIKTVGIVFGGVSGEHEVSIKSARTIIHALKHPININKFDVISIYIDKKGKWWPSEIAEKVLESDPNFDKNIFFKQVEFIGLDHLPKETEKIQIWFPVLHGPNGEDGSIQGFFQLTGKPYVGSGVLGSALGMDKIAMKAAFSAAGLPQVNYCEIHSIDLLDKKRLSYLIQKIETQLGYPCFIKPANLGSSVGISKAYDKKELLNGLDLAAQLDSRIVVEKNIKARELECAVIGKKQIKTSCVGEVRYSSDWYDYDSKYSKNSTKTLIPAPIPEKISKEVQSLSILACKAISAEGIARVDFFYDEEKDSLWINEINTMPGFTEQSMYPMLWDASGIDISQLVARLIESA.

The ATP-grasp domain maps to 141-349 (KAAFSAAGLP…ISQLVARLIE (209 aa)). An ATP-binding site is contributed by 176-231 (ETQLGYPCFIKPANLGSSVGISKAYDKKELLNGLDLAAQLDSRIVVEKNIKARELE). The Mg(2+) site is built by Asp-302, Glu-316, and Asn-318.

The protein belongs to the D-alanine--D-alanine ligase family. Mg(2+) is required as a cofactor. Requires Mn(2+) as cofactor.

It localises to the cytoplasm. The enzyme catalyses 2 D-alanine + ATP = D-alanyl-D-alanine + ADP + phosphate + H(+). The protein operates within cell wall biogenesis; peptidoglycan biosynthesis. In terms of biological role, cell wall formation. The polypeptide is D-alanine--D-alanine ligase (Prochlorococcus marinus (strain SARG / CCMP1375 / SS120)).